The chain runs to 337 residues: Centromere protein N (337 aa).

A phosphoserine mark is found at S226 and S233.

This sequence belongs to the CENP-N/CHL4 family. As to quaternary structure, component of the CENPA-NAC complex, at least composed of CENPA, CENPC, CENPH, CENPM, CENPN, CENPT and CENPU. The CENPA-NAC complex interacts with the CENPA-CAD complex, composed of CENPI, CENPK, CENPL, CENPO, CENPP, CENPQ, CENPR and CENPS. Interacts directly with CENPA. Identified in a centromere complex containing histones H2A, H2B and H4, and at least CENPA, CENPB, CENPC, CENPT, CENPN, HJURP, SUPT16H, SSRP1 and RSF1.

Its subcellular location is the nucleus. The protein localises to the chromosome. The protein resides in the centromere. It localises to the kinetochore. In terms of biological role, component of the CENPA-NAC (nucleosome-associated) complex, a complex that plays a central role in assembly of kinetochore proteins, mitotic progression and chromosome segregation. The CENPA-NAC complex recruits the CENPA-CAD (nucleosome distal) complex and may be involved in incorporation of newly synthesized CENPA into centromeres. CENPN is the first protein to bind specifically to CENPA nucleosomes and the direct binding of CENPA nucleosomes by CENPN is required for centromere assembly. Required for chromosome congression and efficiently align the chromosomes on a metaphase plate. The chain is Centromere protein N (Cenpn) from Mus musculus (Mouse).